Consider the following 517-residue polypeptide: MGKKGSWFSAIKRVFTPHSKEKQLSNNNQEPEIKSENKEKKKKGFGKKLRNGETNSFLPIFRQPSSIEKILSEAEREHNLVFRPPTPTDRANSSSTSVASPLVRPASPKVPSQRYVSSPKPISPRVAYPQVHYPKPPSPKPPSPRAVSPRIVQRREFVHRPEPSLLVKNAYAIKIQAAFRGYMARRSFRALKGLVRLQGVVRGHSVKRQTMNAMKYMQLLVRVQTQVQSRRIQMLENRARNDKDDTKLVSSRMSDDWDDSVLTKEEKDVRLHRKIDAMIKRERSMAYAYSHQLWKNSPKSAQDIRTSGFPLWWNWVDRQKNQNQPFRLTPTRPSLSPQPQSSNQNHFRLNNSFDTSTPNSSKSTFVTPSRPIHTPQPYSSSVSRYSRGGGRATQDSPFKDDDSLTSCPPFSAPSYMAPTVSAKAKLRANSNPKERMDRTPVSTNEKRRSSFPLGSFKWNKGSLFMSNNSNNKGPGSSSSGAVVLEKHKTLKSVGNLSIDSTVSMPATIGRRAFNRFA.

Residues 1–11 are calmodulin-binding; it reads MGKKGSWFSAI. Disordered stretches follow at residues 1–60 and 81–147; these read MGKK…FLPI and VFRP…PRAV. Basic residues predominate over residues 40-49; the sequence is KKKKGFGKKL. Over residues 89 to 99 the composition is skewed to polar residues; the sequence is DRANSSSTSVA. Residues 134 to 144 are compositionally biased toward pro residues; it reads PKPPSPKPPSP. IQ domains follow at residues 168-196 and 197-218; these read KNAYAIKIQAAFRGYMARRSFRALKGLVR and LQGVVRGHSVKRQTMNAMKYMQ. 2 disordered regions span residues 324–407 and 425–452; these read QPFR…LTSC and KLRANSNPKERMDRTPVSTNEKRRSSFP. Over residues 328–342 the composition is skewed to low complexity; sequence LTPTRPSLSPQPQSS. Residues 343–367 show a composition bias toward polar residues; it reads NQNHFRLNNSFDTSTPNSSKSTFVT. The segment covering 432 to 448 has biased composition (basic and acidic residues); sequence PKERMDRTPVSTNEKRR.

This sequence belongs to the IQD family. In terms of assembly, binds to multiple calmodulin (CaM) in the presence of Ca(2+) and CaM-like proteins. As to expression, expressed in vessels of roots, cotyledons and leaves, as well as in trichomes.

Its subcellular location is the cell membrane. The protein localises to the cytoplasm. The protein resides in the cytoskeleton. Its function is as follows. May be involved in cooperative interactions with calmodulins or calmodulin-like proteins. Recruits calmodulin proteins to microtubules, thus being a potential scaffold in cellular signaling and trafficking. Regulates the formation of oval xylem secondary cell-wall deposition pits through microtubule-dependent lateral inhibition of Rho GTPase domains, thus confining the area of active ROP domains within the lattice of the cortical microtubules. May associate with nucleic acids and regulate gene expression at the transcriptional or post-transcriptional level. This Arabidopsis thaliana (Mouse-ear cress) protein is Protein IQ-DOMAIN 13.